The following is a 268-amino-acid chain: Membrane lipoprotein TpN32 (268 aa).

A signal peptide spans 1–23; that stretch reads MKGKTVSAALVGKLIALSVGVVA. A lipid anchor (N-palmitoyl cysteine) is attached at Cys-24. A lipid anchor (S-diacylglycerol cysteine) is attached at Cys-24.

It belongs to the NlpA lipoprotein family.

The protein resides in the cell membrane. The polypeptide is Membrane lipoprotein TpN32 (tpn32) (Treponema pallidum (strain Nichols)).